We begin with the raw amino-acid sequence, 82 residues long: ATP synthase subunit c (82 aa).

A run of 2 helical transmembrane segments spans residues Pro3–Gly23 and Leu57–Ala77.

The protein belongs to the ATPase C chain family. In terms of assembly, F-type ATPases have 2 components, F(1) - the catalytic core - and F(0) - the membrane proton channel. F(1) has five subunits: alpha(3), beta(3), gamma(1), delta(1), epsilon(1). F(0) has four main subunits: a(1), b(1), b'(1) and c(10-14). The alpha and beta chains form an alternating ring which encloses part of the gamma chain. F(1) is attached to F(0) by a central stalk formed by the gamma and epsilon chains, while a peripheral stalk is formed by the delta, b and b' chains.

Its subcellular location is the cellular thylakoid membrane. Its function is as follows. F(1)F(0) ATP synthase produces ATP from ADP in the presence of a proton or sodium gradient. F-type ATPases consist of two structural domains, F(1) containing the extramembraneous catalytic core and F(0) containing the membrane proton channel, linked together by a central stalk and a peripheral stalk. During catalysis, ATP synthesis in the catalytic domain of F(1) is coupled via a rotary mechanism of the central stalk subunits to proton translocation. Functionally, key component of the F(0) channel; it plays a direct role in translocation across the membrane. A homomeric c-ring of between 10-14 subunits forms the central stalk rotor element with the F(1) delta and epsilon subunits. The chain is ATP synthase subunit c from Synechococcus sp. (strain PCC 6716).